A 540-amino-acid polypeptide reads, in one-letter code: MWLLRCVLLCVSLSLAVSGQHKPEAPDYSSVLHCGPWSFQFAVNLNQEATSPPVLIAWDNQGLLHELQNDSDCGTWIRKGPGSSVVLEATYSSCYVTEWDSHYIMPVGVEGAGAAEHKVVTERKLLKCPMDLLARDAPDTDWCDSIPARDRLPCAPSPISRGDCEGLGCCYSSEEVNSCYYGNTVTLHCTREGHFSIAVSRNVTSPPLLLDSVRLALRNDSACNPVMATQAFVLFQFPFTSCGTTRQITGDRAVYENELVATRDVKNGSRGSVTRDSIFRLHVSCSYSVSSNSLPINVQVFTLPPPFPETQPGPLTLELQIAKDKNYGSYYGVGDYPVVKLLRDPIYVEVSILHRTDPYLGLLLQQCWATPSTDPLSQPQWPILVKGCPYIGDNYQTQLIPVQKALDLPFPSHHQRFSIFTFSFVNPTVEKQALRGPVHLHCSVSVCQPAETPSCVVTCPDLSRRRNFDNSSQNTTASVSSKGPMILLQATKDPPEKLRVPVDSKVLWVAGLSGTLILGALLVSYLAVKKQKSCPDQMCQ.

A signal peptide spans 1-18 (MWLLRCVLLCVSLSLAVS). The Extracellular portion of the chain corresponds to 19-505 (GQHKPEAPDY…EKLRVPVDSK (487 aa)). Asn-69 carries N-linked (GlcNAc...) asparagine glycosylation. Residues 141–183 (DWCDSIPARDRLPCAPSPISRGDCEGLGCCYSSEEVNSCYYGN) enclose the P-type domain. Positions 188 to 466 (HCTREGHFSI…VTCPDLSRRR (279 aa)) constitute a ZP domain. N-linked (GlcNAc...) asparagine glycans are attached at residues Asn-202, Asn-219, and Asn-267. O-linked (GalNAc...) threonine glycosylation occurs at Thr-302. Cysteines 367 and 442 form a disulfide. The propeptide at 463–540 (SRRRNFDNSS…QKSCPDQMCQ (78 aa)) is removed in mature form. N-linked (GlcNAc...) asparagine glycosylation is found at Asn-470 and Asn-474. Residues 506 to 526 (VLWVAGLSGTLILGALLVSYL) traverse the membrane as a helical segment. The Cytoplasmic segment spans residues 527 to 540 (AVKKQKSCPDQMCQ).

The protein belongs to the ZP domain family. ZPB subfamily. In terms of processing, proteolytically cleaved before the transmembrane segment to yield the secreted ectodomain incorporated in the zona pellucida. As to expression, expressed in oocytes.

The protein localises to the zona pellucida. It is found in the cell membrane. In terms of biological role, component of the zona pellucida, an extracellular matrix surrounding oocytes which mediates sperm binding, induction of the acrosome reaction and prevents post-fertilization polyspermy. The zona pellucida is composed of 3 to 4 glycoproteins, ZP1, ZP2, ZP3, and ZP4. ZP4 may act as a sperm receptor. The protein is Zona pellucida sperm-binding protein 4 (ZP4) of Homo sapiens (Human).